The primary structure comprises 436 residues: Eukaryotic translation initiation factor 4B (436 aa).

Residues 56–98 (AKNNSNNTRSGGFGGSFGGRSRLDPALGGGSSDRREEYPVPDA) are disordered. Phosphoserine is present on residues Ser-65 and Ser-71. An RRM domain is found at 101-183 (YRAVINNIPW…RTVYVSVAAP (83 aa)). The segment at 185–406 (RGGGADVDWS…EKQNGDAKEN (222 aa)) is disordered. The 1; approximate repeat unit spans residues 190–210 (DVDWSSARGSNFQGDGREDAP). The segment at 190 to 350 (DVDWSSARGS…DWGAARGAQF (161 aa)) is 7 X approximate tandem repeats. 5 consecutive repeat copies span residues 211-232 (DLDWGAARGSNFRGPRREREEV), 233-258 (DIDWTAARGSNFQGSSRPPRREREEV), 259-284 (DIDWSAARGSNFQGSSRPPRREREEP), 285-310 (DIDWSAARGSNFQSSSRPPRREREEP), and 311-340 (DIDWSAARGSNFQSSSRPPRREREKEEPAL). Positions 329-338 (PRREREKEEP) are enriched in basic and acidic residues. The stretch at 341–350 (DWGAARGAQF) is one 7; truncated repeat. 2 stretches are compositionally biased toward basic and acidic residues: residues 359-376 (TYKDRSLTNKKTTDEQPK) and 397-406 (EKQNGDAKEN).

Its function is as follows. Involved in translation initiation. May be the homolog of mammalian eIF4B and be part of an RNA helicase. STM1/TIF3 is a non-essential gene. In Saccharomyces cerevisiae (strain ATCC 204508 / S288c) (Baker's yeast), this protein is Eukaryotic translation initiation factor 4B (TIF3).